Here is a 168-residue protein sequence, read N- to C-terminus: Ribosome maturation factor RimM (168 aa).

Residues 96 to 168 (EGDYYWTDLI…IIVVEWDADF (73 aa)) enclose the PRC barrel domain.

The protein belongs to the RimM family. As to quaternary structure, binds ribosomal protein uS19.

It is found in the cytoplasm. Functionally, an accessory protein needed during the final step in the assembly of 30S ribosomal subunit, possibly for assembly of the head region. Essential for efficient processing of 16S rRNA. May be needed both before and after RbfA during the maturation of 16S rRNA. It has affinity for free ribosomal 30S subunits but not for 70S ribosomes. This is Ribosome maturation factor RimM from Coxiella burnetii (strain RSA 331 / Henzerling II).